The sequence spans 293 residues: Ribosomal protein L11 methyltransferase (293 aa).

Residues T145, G166, D188, and N230 each contribute to the S-adenosyl-L-methionine site.

Belongs to the methyltransferase superfamily. PrmA family.

It localises to the cytoplasm. It catalyses the reaction L-lysyl-[protein] + 3 S-adenosyl-L-methionine = N(6),N(6),N(6)-trimethyl-L-lysyl-[protein] + 3 S-adenosyl-L-homocysteine + 3 H(+). Its function is as follows. Methylates ribosomal protein L11. The sequence is that of Ribosomal protein L11 methyltransferase from Shewanella baltica (strain OS195).